We begin with the raw amino-acid sequence, 416 residues long: 5-methylthioadenosine/S-adenosylhomocysteine deaminase 2 (416 aa).

Zn(2+)-binding residues include His58 and His60. Substrate is bound by residues Glu86 and His178. His205 contacts Zn(2+). Residues Glu208 and Asp293 each contribute to the substrate site. Zn(2+) is bound at residue Asp293.

The protein belongs to the metallo-dependent hydrolases superfamily. MTA/SAH deaminase family. It depends on Zn(2+) as a cofactor.

The enzyme catalyses S-adenosyl-L-homocysteine + H2O + H(+) = S-inosyl-L-homocysteine + NH4(+). The catalysed reaction is S-methyl-5'-thioadenosine + H2O + H(+) = S-methyl-5'-thioinosine + NH4(+). Its function is as follows. Catalyzes the deamination of 5-methylthioadenosine and S-adenosyl-L-homocysteine into 5-methylthioinosine and S-inosyl-L-homocysteine, respectively. Is also able to deaminate adenosine. This Archaeoglobus fulgidus (strain ATCC 49558 / DSM 4304 / JCM 9628 / NBRC 100126 / VC-16) protein is 5-methylthioadenosine/S-adenosylhomocysteine deaminase 2.